The sequence spans 161 residues: uncharacterized protein (161 aa).

This is an uncharacterized protein from Rickettsia conorii (strain ATCC VR-613 / Malish 7).